A 1040-amino-acid chain; its full sequence is Multidrug resistance protein MdtB (1040 aa).

12 consecutive transmembrane segments (helical) span residues 25-45 (LLMA…PVAA), 347-367 (LMLA…NIPA), 369-389 (IIPG…MVFL), 396-416 (LTLM…IVVI), 440-460 (IGFT…PLLF), 472-492 (FAVT…TLTP), 537-557 (WLTL…WIVI), 863-883 (LGST…VLGV), 888-908 (FIHP…ALLA), 910-930 (IIAG…LIGI), 968-988 (ILMT…STGV), and 998-1018 (IAMV…TPVI).

This sequence belongs to the resistance-nodulation-cell division (RND) (TC 2.A.6) family. MdtB subfamily. As to quaternary structure, part of a tripartite efflux system composed of MdtA, MdtB and MdtC. MdtB forms a heteromultimer with MdtC.

It localises to the cell inner membrane. The polypeptide is Multidrug resistance protein MdtB (Salmonella newport (strain SL254)).